Consider the following 974-residue polypeptide: Bifunctional glutamine synthetase adenylyltransferase/adenylyl-removing enzyme (974 aa).

An adenylyl removase region spans residues 1 to 464 (MKNAFLKTHL…HYAALFENEQ (464 aa)). Residues 468–974 (LEIGNLVFTG…CSIFKQIMKH (507 aa)) form an adenylyl transferase region.

Belongs to the GlnE family. Mg(2+) is required as a cofactor.

It catalyses the reaction [glutamine synthetase]-O(4)-(5'-adenylyl)-L-tyrosine + phosphate = [glutamine synthetase]-L-tyrosine + ADP. The enzyme catalyses [glutamine synthetase]-L-tyrosine + ATP = [glutamine synthetase]-O(4)-(5'-adenylyl)-L-tyrosine + diphosphate. In terms of biological role, involved in the regulation of glutamine synthetase GlnA, a key enzyme in the process to assimilate ammonia. When cellular nitrogen levels are high, the C-terminal adenylyl transferase (AT) inactivates GlnA by covalent transfer of an adenylyl group from ATP to specific tyrosine residue of GlnA, thus reducing its activity. Conversely, when nitrogen levels are low, the N-terminal adenylyl removase (AR) activates GlnA by removing the adenylyl group by phosphorolysis, increasing its activity. The regulatory region of GlnE binds the signal transduction protein PII (GlnB) which indicates the nitrogen status of the cell. The sequence is that of Bifunctional glutamine synthetase adenylyltransferase/adenylyl-removing enzyme from Bartonella quintana (strain Toulouse) (Rochalimaea quintana).